The following is a 251-amino-acid chain: MNINDALTSILASKKYRALCPDTVRRILTEEWGRHKSPKQTVEAARTRLHGICGAYVTPESLKAAAAALSAGDVKKALSLHASTKERLAELDTLYDFIFSAETPRRVLDIACGLNPLALYERGIASVWGCDIHQGLGDVITPFAREKDWDFTFALQDVLCAPPAEAGDLALIFKLLPLLEREQAGSAMALLQSLNTPRMAVSFPTRSLGGRGKGMEANYAAWFEGGLPAEFEIEDKKTIGTELIYLIKKNG.

Residues Tyr-56, His-81 to Ser-83, Arg-87, Ala-111, Asp-131, Asp-157 to Val-158, Phe-173, and Glu-182 contribute to the S-adenosyl-L-methionine site.

The protein belongs to the methyltransferase superfamily. Aminoglycoside resistance family.

It carries out the reaction guanosine(1405) in 16S rRNA + S-adenosyl-L-methionine = N(7)-methylguanosine(1405) in 16S rRNA + S-adenosyl-L-homocysteine. Its function is as follows. Specifically methylates the N(7) position of guanine 1405 in 16S rRNA. Confers resistance to various aminoglycosides, including kanamycin, tobramycin, amikacin, arbekacin, gentamicin, sisomicin and isepamicin. The chain is 16S rRNA (guanine(1405)-N(7))-methyltransferase (rmtB) from Serratia marcescens.